Reading from the N-terminus, the 525-residue chain is GMP synthase [glutamine-hydrolyzing] (525 aa).

The Glutamine amidotransferase type-1 domain maps to 8 to 207; the sequence is KILILDFGSQ…ALDICGCAAN (200 aa). The active-site Nucleophile is the cysteine 85. Residues histidine 181 and glutamate 183 contribute to the active site. Residues 208–400 form the GMPS ATP-PPase domain; the sequence is WKPSSIIEDA…LGLPYNMLYR (193 aa). 235–241 contributes to the ATP binding site; the sequence is SGGVDSS.

In terms of assembly, homodimer.

The catalysed reaction is XMP + L-glutamine + ATP + H2O = GMP + L-glutamate + AMP + diphosphate + 2 H(+). It participates in purine metabolism; GMP biosynthesis; GMP from XMP (L-Gln route): step 1/1. Its function is as follows. Catalyzes the synthesis of GMP from XMP. The sequence is that of GMP synthase [glutamine-hydrolyzing] from Shewanella oneidensis (strain ATCC 700550 / JCM 31522 / CIP 106686 / LMG 19005 / NCIMB 14063 / MR-1).